The chain runs to 77 residues: Small ribosomal subunit protein bS16 (77 aa).

Belongs to the bacterial ribosomal protein bS16 family.

The protein is Small ribosomal subunit protein bS16 of Helicobacter hepaticus (strain ATCC 51449 / 3B1).